Here is a 180-residue protein sequence, read N- to C-terminus: Thioredoxin 3 (180 aa).

The Cytoplasmic portion of the chain corresponds to 1–3 (MAL). Residues 4 to 24 (ICIGSVCFSLFHIGVIILLII) traverse the membrane as a helical; Signal-anchor for type II membrane protein segment. Topologically, residues 25-180 (NYFSSHIKKI…FQKYCLEKAK (156 aa)) are lumenal. Positions 29–176 (SHIKKIFPSF…IEKAFQKYCL (148 aa)) constitute a Thioredoxin domain. Catalysis depends on nucleophile residues C99 and C102. Residues C99 and C102 are joined by a disulfide bond.

It belongs to the thioredoxin family. The disulfide bond between Cys-99 and Cys-102 acts as a redox-active center and is reduced by thioredoxin reductase TRXR.

It localises to the endoplasmic reticulum membrane. In terms of biological role, participates in various redox reactions through the reversible oxidation of its active center dithiol to a disulfide and catalyzes dithiol-disulfide exchange reactions. The chain is Thioredoxin 3 from Plasmodium falciparum (isolate 3D7).